The sequence spans 312 residues: Acetaldehyde dehydrogenase (312 aa).

Position 11-14 (11-14 (SGNI)) interacts with NAD(+). Catalysis depends on Cys129, which acts as the Acyl-thioester intermediate. NAD(+) is bound by residues 160 to 168 (SAGPGTRAN) and Asn287.

Belongs to the acetaldehyde dehydrogenase family.

It carries out the reaction acetaldehyde + NAD(+) + CoA = acetyl-CoA + NADH + H(+). The chain is Acetaldehyde dehydrogenase (xylQ) from Sphingobium yanoikuyae (Sphingomonas yanoikuyae).